Here is a 694-residue protein sequence, read N- to C-terminus: Heat shock protein HSP 90-alpha (694 aa).

Phosphothreonine; by PRKDC occurs at positions 5 and 7. An interaction with NR3C1 region spans residues 9-236 (DQPMEEEEVE…DKEVSDDEAK (228 aa)). An ATP-binding site is contributed by asparagine 51. An N6-acetyllysine mark is found at lysine 58 and lysine 84. The ATP site is built by aspartate 93, lysine 112, and phenylalanine 138. Residues 228–241 (KEVSDDEAKQPDDK) are compositionally biased toward basic and acidic residues. The tract at residues 228-275 (KEVSDDEAKQPDDKPEIEDVGSDEEEEEKKDGDIDQEELNKTKPIWTR) is disordered. Residues serine 231 and serine 249 each carry the phosphoserine modification. A compositionally biased stretch (acidic residues) spans 242-255 (PEIEDVGSDEEEEE). Positions 256–268 (KKDGDIDQEELNK) are enriched in basic and acidic residues. Positions 258-578 (DGDIDQEELN…TANMERIMKA (321 aa)) are interaction with NR3C1. The segment at 261-582 (IDQEELNKTK…ERIMKAQALR (322 aa)) is interaction with FNIP2 and TSC1. An interaction with FLCN and FNIP1 region spans residues 261-694 (IDQEELNKTK…DDTSRMEEVD (434 aa)). Tyrosine 289 bears the Phosphotyrosine mark. Arginine 376 contributes to the ATP binding site. At lysine 419 the chain carries N6-acetyllysine. A Phosphoserine modification is found at serine 429. Lysine 434 is modified (N6-acetyllysine). A Phosphoserine modification is found at serine 452. Position 465 is an N6-acetyllysine (lysine 465). Tyrosine 468 carries the post-translational modification Phosphotyrosine. At lysine 547 the chain carries N6-acetyllysine. Cysteine 560 carries the S-nitrosocysteine modification. The interval 590–693 (MAAKKHLEVN…DDDTSRMEEV (104 aa)) is interaction with NR1D1. Residue serine 603 is modified to Phosphoserine. A required for homodimerization region spans residues 644-694 (QTHANRIYRMIKLGLGIDEDDPTADDTAAAVTEEMPPLEGDDDTSRMEEVD). The disordered stretch occupies residues 662-694 (EDDPTADDTAAAVTEEMPPLEGDDDTSRMEEVD). The span at 668 to 677 (DDTAAAVTEE) shows a compositional bias: low complexity. The short motif at 685–694 (DDTSRMEEVD) is the TPR repeat-binding element. Residues 690–694 (MEEVD) are essential for interaction with SMYD3, TSC1 and STIP1/HOP. The interval 691–694 (EEVD) is essential for interaction with SGTA and TTC1.

It belongs to the heat shock protein 90 family. Homodimer. Identified in NR3C1/GCR steroid receptor-chaperone complexes formed at least by NR3C1, HSP90AA1 and a variety of proteins containing TPR repeats such as FKBP4, FKBP5, PPID, PPP5C or STIP1. Forms a complex containing HSP90AA1, TSC1 and TSC2; TSC1 is required to recruit TCS2 to the complex. The closed form interacts (via the middle domain and TPR repeat-binding motif) with co-chaperone TSC1 (via C-terminus). Interacts with TOM34. Interacts with TERT; the interaction, together with PTGES3, is required for correct assembly and stabilization of the TERT holoenzyme complex. Interacts with CHORDC1 and DNAJC7. Interacts with STUB1 and UBE2N; may couple the chaperone and ubiquitination systems. Interacts (via TPR repeat-binding motif) with PPP5C (via TPR repeats); the interaction is direct and activates PPP5C phosphatase activity. Following LPS binding, may form a complex with CXCR4, GDF5 and HSPA8. Interacts with KSR1. Interacts with co-chaperone CDC37 (via C-terminus); the interaction inhibits HSP90AA1 ATPase activity. May interact with NWD1. Interacts with FNIP1 and FNIP2; the interaction inhibits HSP90AA1 ATPase activity. Interacts with co-chaperone AHSA1 (phosphorylated on 'Tyr-223'); the interaction activates HSP90AA1 ATPase activity and results in the dissociation of TSC1 from HSP90AA1. Interacts with FLCN in the presence of FNIP1. Interacts with HSP70, STIP1 and PTGES3. Interacts with SMYD3; this interaction enhances SMYD3 histone-lysine N-methyltransferase. Interacts with SGTA (via TPR repeats). Interacts with TTC1 (via TPR repeats). Interacts with HSF1 in an ATP-dependent manner. Interacts with MET; the interaction suppresses MET kinase activity. Interacts with ERBB2 in an ATP-dependent manner; the interaction suppresses ERBB2 kinase activity. Interacts with HIF1A, KEAP1 and RHOBTB2. Interacts with HSF1; this interaction is decreased in a IER5-dependent manner, promoting HSF1 accumulation in the nucleus, homotrimerization and DNA-binding activities. Interacts with STUB1 and SMAD3. Interacts with HSP90AB1; interaction is constitutive. Interacts with HECTD1 (via N-terminus). Interacts with NR3C1 (via domain NR LBD) and NR1D1 (via domain NR LBD). Interacts with NLPR12. Interacts with PDCL3. Interacts with TOMM70; the interaction is required for preprotein mitochondrial import. Interacts with TOMM70, IRF3 and TBK1; the interactions are direct and mediate the association of TOMM70 with IRF3 and TBK1. Forms a complex with ASL, ASS1 and NOS2; the complex regulates cell-autonomous L-arginine synthesis and citrulline recycling while channeling extracellular L-arginine to nitric oxide synthesis pathway. ISGylated. Post-translationally, S-nitrosylated; negatively regulates the ATPase activity and the activation of eNOS by HSP90AA1. In terms of processing, ubiquitinated via 'Lys-63'-linked polyubiquitination by HECTD1. Ubiquitination promotes translocation into the cytoplasm away from the membrane and secretory pathways.

It localises to the nucleus. It is found in the cytoplasm. Its subcellular location is the melanosome. The protein localises to the cell membrane. The protein resides in the mitochondrion. It catalyses the reaction ATP + H2O = ADP + phosphate + H(+). With respect to regulation, in the resting state, through the dimerization of its C-terminal domain, HSP90 forms a homodimer which is defined as the open conformation. Upon ATP-binding, the N-terminal domain undergoes significant conformational changes and comes in contact to form an active closed conformation. After HSP90 finishes its chaperoning tasks of assisting the proper folding, stabilization and activation of client proteins under the active state, ATP molecule is hydrolyzed to ADP which then dissociates from HSP90 and directs the protein back to the resting state. Co-chaperone TSC1 promotes ATP binding and inhibits HSP90AA1 ATPase activity. Binding to phosphorylated AHSA1 promotes HSP90AA1 ATPase activity. Inhibited by geldanamycin, Ganetespib (STA-9090) and SNX-2112. Its function is as follows. Molecular chaperone that promotes the maturation, structural maintenance and proper regulation of specific target proteins involved for instance in cell cycle control and signal transduction. Undergoes a functional cycle that is linked to its ATPase activity which is essential for its chaperone activity. This cycle probably induces conformational changes in the client proteins, thereby causing their activation. Interacts dynamically with various co-chaperones that modulate its substrate recognition, ATPase cycle and chaperone function. Engages with a range of client protein classes via its interaction with various co-chaperone proteins or complexes, that act as adapters, simultaneously able to interact with the specific client and the central chaperone itself. Recruitment of ATP and co-chaperone followed by client protein forms a functional chaperone. After the completion of the chaperoning process, properly folded client protein and co-chaperone leave HSP90 in an ADP-bound partially open conformation and finally, ADP is released from HSP90 which acquires an open conformation for the next cycle. Plays a critical role in mitochondrial import, delivers preproteins to the mitochondrial import receptor TOMM70. Apart from its chaperone activity, it also plays a role in the regulation of the transcription machinery. HSP90 and its co-chaperones modulate transcription at least at three different levels. In the first place, they alter the steady-state levels of certain transcription factors in response to various physiological cues. Second, they modulate the activity of certain epigenetic modifiers, such as histone deacetylases or DNA methyl transferases, and thereby respond to the change in the environment. Third, they participate in the eviction of histones from the promoter region of certain genes and thereby turn on gene expression. Binds bacterial lipopolysaccharide (LPS) and mediates LPS-induced inflammatory response, including TNF secretion by monocytes. Antagonizes STUB1-mediated inhibition of TGF-beta signaling via inhibition of STUB1-mediated SMAD3 ubiquitination and degradation. Mediates the association of TOMM70 with IRF3 or TBK1 in mitochondrial outer membrane which promotes host antiviral response. The chain is Heat shock protein HSP 90-alpha (HSP90AA1) from Oryctolagus cuniculus (Rabbit).